The chain runs to 530 residues: Negative elongation factor A (530 aa).

An HDAg domain is found at 89-248; the sequence is WVLMVADILK…TPIPPSRTPL (160 aa). Residues 125–188 form an NELF-C/D-binding region; the sequence is REKVSECEAS…LQKSTETAQQ (64 aa). A Phosphothreonine modification is found at Thr157. An RNAPII-binding region spans residues 189-248; that stretch reads LKRSAGVPFHAKGRGLLRKMDTTTPLKGIPKQAPFRSPTTPSVFSPSGNRTPIPPSRTPL. Disordered stretches follow at residues 213 to 248, 266 to 296, and 312 to 409; these read PLKG…RTPL, GAGR…VENA, and SLNS…TAQT. Phosphoserine occurs at positions 225 and 233. Residues 225 to 238 show a composition bias toward polar residues; the sequence is SPTTPSVFSPSGNR. Thr277 bears the Phosphothreonine mark. Residues 277 to 291 are compositionally biased toward basic and acidic residues; the sequence is TLDTEVVEKPTKEET. The span at 315–341 shows a compositional bias: low complexity; it reads SEPTLPSTSYLPSTPSVVPASSYIPSS. Ser363 carries the phosphoserine modification.

The protein belongs to the NELF-A family. In terms of assembly, the NELF complex is composed of NELFA, NELFB, NELFCD and NELFE; NELFA and NELFCD form a stable subcomplex that binds to the N-terminus of NELFB. In vitro, the NELFA:NELFCD subcomplex binds to ssDNA and ssRNA in a sequence- and structure-dependent manner. Interacts with the RNA polymerase II complex when it is not phosphorylated by P-TEFb. Interacts with NELFB. As to expression, ubiquitous. Expressed in brain, heart, spleen, lung, liver, muscle, kidney and testis. Already expressed in 7 dpc embryos.

The protein localises to the nucleus. Essential component of the NELF complex, a complex that negatively regulates the elongation of transcription by RNA polymerase II. The NELF complex, which acts via an association with the DSIF complex and causes transcriptional pausing, is counteracted by the P-TEFb kinase complex. This Mus musculus (Mouse) protein is Negative elongation factor A (Nelfa).